The sequence spans 315 residues: 4-hydroxy-3-methylbut-2-enyl diphosphate reductase (315 aa).

C12 contributes to the [4Fe-4S] cluster binding site. Positions 41 and 74 each coordinate (2E)-4-hydroxy-3-methylbut-2-enyl diphosphate. H41 and H74 together coordinate dimethylallyl diphosphate. H41 and H74 together coordinate isopentenyl diphosphate. C96 contributes to the [4Fe-4S] cluster binding site. H124 is a binding site for (2E)-4-hydroxy-3-methylbut-2-enyl diphosphate. H124 provides a ligand contact to dimethylallyl diphosphate. H124 serves as a coordination point for isopentenyl diphosphate. The Proton donor role is filled by E126. Residue T168 coordinates (2E)-4-hydroxy-3-methylbut-2-enyl diphosphate. A [4Fe-4S] cluster-binding site is contributed by C198. (2E)-4-hydroxy-3-methylbut-2-enyl diphosphate contacts are provided by S226, S227, N228, and S270. Dimethylallyl diphosphate contacts are provided by S226, S227, N228, and S270. Isopentenyl diphosphate is bound by residues S226, S227, N228, and S270.

The protein belongs to the IspH family. The cofactor is [4Fe-4S] cluster.

It catalyses the reaction isopentenyl diphosphate + 2 oxidized [2Fe-2S]-[ferredoxin] + H2O = (2E)-4-hydroxy-3-methylbut-2-enyl diphosphate + 2 reduced [2Fe-2S]-[ferredoxin] + 2 H(+). The enzyme catalyses dimethylallyl diphosphate + 2 oxidized [2Fe-2S]-[ferredoxin] + H2O = (2E)-4-hydroxy-3-methylbut-2-enyl diphosphate + 2 reduced [2Fe-2S]-[ferredoxin] + 2 H(+). The protein operates within isoprenoid biosynthesis; dimethylallyl diphosphate biosynthesis; dimethylallyl diphosphate from (2E)-4-hydroxy-3-methylbutenyl diphosphate: step 1/1. It functions in the pathway isoprenoid biosynthesis; isopentenyl diphosphate biosynthesis via DXP pathway; isopentenyl diphosphate from 1-deoxy-D-xylulose 5-phosphate: step 6/6. In terms of biological role, catalyzes the conversion of 1-hydroxy-2-methyl-2-(E)-butenyl 4-diphosphate (HMBPP) into a mixture of isopentenyl diphosphate (IPP) and dimethylallyl diphosphate (DMAPP). Acts in the terminal step of the DOXP/MEP pathway for isoprenoid precursor biosynthesis. In Pseudomonas syringae pv. syringae (strain B728a), this protein is 4-hydroxy-3-methylbut-2-enyl diphosphate reductase.